A 591-amino-acid chain; its full sequence is L-fucose isomerase (591 aa).

Catalysis depends on proton acceptor residues glutamate 337 and aspartate 361. Residues glutamate 337, aspartate 361, and histidine 528 each coordinate Mn(2+).

The protein belongs to the L-fucose isomerase family. As to quaternary structure, homohexamer. Mn(2+) serves as cofactor.

The protein resides in the cytoplasm. The enzyme catalyses L-fucose = L-fuculose. It functions in the pathway carbohydrate degradation; L-fucose degradation; L-lactaldehyde and glycerone phosphate from L-fucose: step 1/3. In terms of biological role, converts the aldose L-fucose into the corresponding ketose L-fuculose. The sequence is that of L-fucose isomerase from Klebsiella pneumoniae subsp. pneumoniae (strain ATCC 700721 / MGH 78578).